A 108-amino-acid chain; its full sequence is Replication initiation control protein YabA (108 aa).

Positions 83, 85, 99, and 102 each coordinate Zn(2+).

The protein belongs to the YabA family. As to quaternary structure, homotetramer. Interacts with both DnaA and DnaN, acting as a bridge between these two proteins. It depends on Zn(2+) as a cofactor.

It is found in the cytoplasm. The protein localises to the nucleoid. Involved in control of chromosome replication initiation. Inhibits the cooperative binding of DnaA to the oriC region, thus negatively regulating initiation of chromosome replication. Inhibits the ability of DnaA-ATP to form a helix on DNA; does not disassemble preformed DnaA-DNA helices. Decreases the residence time of DnaA on the chromosome at its binding sites (oriC, replication forks and promoter-binding sites). Tethers DnaA to the replication machinery via the DNA polymerase beta sliding clamp subunit (dnaN). Associates with oriC and other DnaA targets on the chromosome in a DnaA-dependent manner. The polypeptide is Replication initiation control protein YabA (Lactococcus lactis subsp. lactis (strain IL1403) (Streptococcus lactis)).